Here is a 57-residue protein sequence, read N- to C-terminus: Small hydrophobic protein (57 aa).

Over 1-8 the chain is Virion surface; it reads MPAIQPPL. Residues 9–29 traverse the membrane as a helical segment; that stretch reads YPTFLLLILLSLIVTLYVWII. Residues 30–57 lie on the Intravirion side of the membrane; that stretch reads STITYKTVVRHAALYQRSFFRWSFDHSL.

Belongs to the rubulavirus small hydrophobic protein family. In terms of assembly, interacts with host TNFRSF1A, RIPK1 and IRAK1; these interactions interfere with host NF-kappa-B activation at the level of receptor complexes. Interacts with host protein UBQLN4.

Its subcellular location is the virion membrane. It is found in the host cell membrane. Plays a role in the inhibition of the host NF-kappa-B pathway. This inhibition occurs at the receptor level, by preventing the signaling of TNFR1 as well as IL-1R and TLR3. The chain is Small hydrophobic protein (SH) from Mumps virus genotype B (strain Urabe vaccine AM9) (MuV).